The primary structure comprises 695 residues: Elongation factor G (695 aa).

The 276-residue stretch at E4 to L279 folds into the tr-type G domain. GTP is bound by residues A13–T20, D79–H83, and N133–D136.

The protein belongs to the TRAFAC class translation factor GTPase superfamily. Classic translation factor GTPase family. EF-G/EF-2 subfamily.

Its subcellular location is the cytoplasm. In terms of biological role, catalyzes the GTP-dependent ribosomal translocation step during translation elongation. During this step, the ribosome changes from the pre-translocational (PRE) to the post-translocational (POST) state as the newly formed A-site-bound peptidyl-tRNA and P-site-bound deacylated tRNA move to the P and E sites, respectively. Catalyzes the coordinated movement of the two tRNA molecules, the mRNA and conformational changes in the ribosome. The sequence is that of Elongation factor G from Rhodopirellula baltica (strain DSM 10527 / NCIMB 13988 / SH1).